Here is a 338-residue protein sequence, read N- to C-terminus: Adenylosuccinate synthetase (338 aa).

GTP contacts are provided by residues 12-18 (GDEGKGK) and 42-44 (GHT). The active-site Proton acceptor is the aspartate 13. Aspartate 13 and glycine 42 together coordinate Mg(2+). IMP contacts are provided by residues 13–16 (DEGK), 40–43 (NAGH), threonine 127, arginine 141, glutamine 179, threonine 194, and arginine 256. Histidine 43 (proton donor) is an active-site residue. A substrate-binding site is contributed by 252–258 (TVTGRRR). GTP-binding positions include arginine 258, 284-286 (CLD), and 324-326 (STG).

Belongs to the adenylosuccinate synthetase family. As to quaternary structure, homodimer. It depends on Mg(2+) as a cofactor.

The protein localises to the cytoplasm. It catalyses the reaction IMP + L-aspartate + GTP = N(6)-(1,2-dicarboxyethyl)-AMP + GDP + phosphate + 2 H(+). Its pathway is purine metabolism; AMP biosynthesis via de novo pathway; AMP from IMP: step 1/2. Its function is as follows. Plays an important role in the de novo pathway of purine nucleotide biosynthesis. Catalyzes the first committed step in the biosynthesis of AMP from IMP. The sequence is that of Adenylosuccinate synthetase from Methanococcus maripaludis (strain DSM 14266 / JCM 13030 / NBRC 101832 / S2 / LL).